A 357-amino-acid chain; its full sequence is MRVSDFRFDLPESLIAHYPHPQRSGCRLLSLEGKTGNLSHGVFTDVLDKLNAGDLLVFNNTRVIPARIYGRKASGGKIEVLVERMLDEHRVLAHVRASKSPKEGASLILGEDESVQATMIARHDTLFEIRFDDERDVLTILNSIGHMPLPPYIDRPDERSDKELYQTVYNERPGAVAAPTAGLHFDEPLLEALRNKGVEMAFVTLHVGAGTFQPVRVDNIEEHTMHSEYAEVPQEVVDAVLACKARGNRVIAVGTTSVRSLESAAKAAKDALIAPFFDDTQIFIYPGYQYQIIDALITNFHLPESTLIMLVSAFAGYKNTMNAYNVAVEQKYRFFSYGDAMFITRNPLAINEKVGEE.

Belongs to the QueA family. Monomer.

Its subcellular location is the cytoplasm. The catalysed reaction is 7-aminomethyl-7-carbaguanosine(34) in tRNA + S-adenosyl-L-methionine = epoxyqueuosine(34) in tRNA + adenine + L-methionine + 2 H(+). It functions in the pathway tRNA modification; tRNA-queuosine biosynthesis. Functionally, transfers and isomerizes the ribose moiety from AdoMet to the 7-aminomethyl group of 7-deazaguanine (preQ1-tRNA) to give epoxyqueuosine (oQ-tRNA). This Proteus mirabilis (strain HI4320) protein is S-adenosylmethionine:tRNA ribosyltransferase-isomerase.